Reading from the N-terminus, the 880-residue chain is Alanine--tRNA ligase (880 aa).

His567, His571, Cys669, and His673 together coordinate Zn(2+).

This sequence belongs to the class-II aminoacyl-tRNA synthetase family. Requires Zn(2+) as cofactor.

The protein localises to the cytoplasm. It catalyses the reaction tRNA(Ala) + L-alanine + ATP = L-alanyl-tRNA(Ala) + AMP + diphosphate. Its function is as follows. Catalyzes the attachment of alanine to tRNA(Ala) in a two-step reaction: alanine is first activated by ATP to form Ala-AMP and then transferred to the acceptor end of tRNA(Ala). Also edits incorrectly charged Ser-tRNA(Ala) and Gly-tRNA(Ala) via its editing domain. The polypeptide is Alanine--tRNA ligase (Bacillus cereus (strain ATCC 14579 / DSM 31 / CCUG 7414 / JCM 2152 / NBRC 15305 / NCIMB 9373 / NCTC 2599 / NRRL B-3711)).